The sequence spans 152 residues: Plant UBX domain-containing protein 12 (152 aa).

The tract at residues 32-61 (KRFSEEESEETENTTNSSNAVFGFPNLPEE) is disordered. In terms of domain architecture, UBX spans 67 to 150 (DQSVLCRICV…GLANSLVSVT (84 aa)).

This is Plant UBX domain-containing protein 12 from Arabidopsis thaliana (Mouse-ear cress).